The chain runs to 158 residues: 3-hydroxyacyl-[acyl-carrier-protein] dehydratase FabZ (158 aa).

Residue His60 is part of the active site.

Belongs to the thioester dehydratase family. FabZ subfamily.

It is found in the cytoplasm. The enzyme catalyses a (3R)-hydroxyacyl-[ACP] = a (2E)-enoyl-[ACP] + H2O. Its function is as follows. Involved in unsaturated fatty acids biosynthesis. Catalyzes the dehydration of short chain beta-hydroxyacyl-ACPs and long chain saturated and unsaturated beta-hydroxyacyl-ACPs. In Zymomonas mobilis subsp. mobilis (strain ATCC 31821 / ZM4 / CP4), this protein is 3-hydroxyacyl-[acyl-carrier-protein] dehydratase FabZ.